The sequence spans 222 residues: Deoxyribose-phosphate aldolase (222 aa).

Catalysis depends on Asp89, which acts as the Proton donor/acceptor. Lys151 acts as the Schiff-base intermediate with acetaldehyde in catalysis. The active-site Proton donor/acceptor is Lys180.

This sequence belongs to the DeoC/FbaB aldolase family. DeoC type 1 subfamily.

It is found in the cytoplasm. The catalysed reaction is 2-deoxy-D-ribose 5-phosphate = D-glyceraldehyde 3-phosphate + acetaldehyde. The protein operates within carbohydrate degradation; 2-deoxy-D-ribose 1-phosphate degradation; D-glyceraldehyde 3-phosphate and acetaldehyde from 2-deoxy-alpha-D-ribose 1-phosphate: step 2/2. Functionally, catalyzes a reversible aldol reaction between acetaldehyde and D-glyceraldehyde 3-phosphate to generate 2-deoxy-D-ribose 5-phosphate. The chain is Deoxyribose-phosphate aldolase from Acholeplasma laidlawii (strain PG-8A).